A 654-amino-acid chain; its full sequence is Tetracycline resistance protein TetQ (654 aa).

The 244-residue stretch at 1-244 folds into the tr-type G domain; it reads MNIINLGILA…AISSFILPPE (244 aa). GTP contacts are provided by residues 10–17, 74–78, and 128–131; these read AHIDAGKT, DTPGH, and NKID.

This sequence belongs to the TRAFAC class translation factor GTPase superfamily. Classic translation factor GTPase family. TetM/TetO subfamily.

Abolishes the inhibitory effect of tetracyclin on protein synthesis by a non-covalent modification of the ribosomes. The chain is Tetracycline resistance protein TetQ (tetQ) from Prevotella intermedia.